Reading from the N-terminus, the 180-residue chain is ATP synthase subunit delta (180 aa).

Belongs to the ATPase delta chain family. As to quaternary structure, F-type ATPases have 2 components, F(1) - the catalytic core - and F(0) - the membrane proton channel. F(1) has five subunits: alpha(3), beta(3), gamma(1), delta(1), epsilon(1). CF(0) has four main subunits: a(1), b(1), b'(1) and c(10-14). The alpha and beta chains form an alternating ring which encloses part of the gamma chain. F(1) is attached to F(0) by a central stalk formed by the gamma and epsilon chains, while a peripheral stalk is formed by the delta, b and b' chains.

The protein localises to the cellular thylakoid membrane. In terms of biological role, f(1)F(0) ATP synthase produces ATP from ADP in the presence of a proton or sodium gradient. F-type ATPases consist of two structural domains, F(1) containing the extramembraneous catalytic core and F(0) containing the membrane proton channel, linked together by a central stalk and a peripheral stalk. During catalysis, ATP synthesis in the catalytic domain of F(1) is coupled via a rotary mechanism of the central stalk subunits to proton translocation. Its function is as follows. This protein is part of the stalk that links CF(0) to CF(1). It either transmits conformational changes from CF(0) to CF(1) or is implicated in proton conduction. The protein is ATP synthase subunit delta of Prochlorococcus marinus subsp. pastoris (strain CCMP1986 / NIES-2087 / MED4).